A 231-amino-acid polypeptide reads, in one-letter code: Trypsin-2 (231 aa).

A signal peptide spans 1-4 (AAFA). Positions 5-9 (TEDDK) are cleaved as a propeptide — activation peptide. The 220-residue stretch at 10–229 (IVGGYECKAY…FNDWLTSTMA (220 aa)) folds into the Peptidase S1 domain. Cystine bridges form between cysteine 16–cysteine 145, cysteine 34–cysteine 50, cysteine 118–cysteine 218, cysteine 125–cysteine 191, cysteine 156–cysteine 170, and cysteine 181–cysteine 205. The active-site Charge relay system is histidine 49. The Ca(2+) site is built by glutamate 61, asparagine 63, valine 66, and glutamate 71. The active-site Charge relay system is aspartate 93. The active-site Charge relay system is the serine 185.

Belongs to the peptidase S1 family. Requires Ca(2+) as cofactor.

Its subcellular location is the secreted. It localises to the extracellular space. The enzyme catalyses Preferential cleavage: Arg-|-Xaa, Lys-|-Xaa.. This is Trypsin-2 from Salmo salar (Atlantic salmon).